A 457-amino-acid chain; its full sequence is Siroheme synthase (457 aa).

A precorrin-2 dehydrogenase /sirohydrochlorin ferrochelatase region spans residues 1–204; the sequence is MDHLPIFCQL…NDQKAITETT (204 aa). NAD(+) is bound by residues 22-23 and 43-44; these read DV and LA. Serine 128 carries the post-translational modification Phosphoserine. Residues 216 to 457 are uroporphyrinogen-III C-methyltransferase; sequence GEVVLVGAGP…RDKLNWFSNH (242 aa). Residue proline 225 participates in S-adenosyl-L-methionine binding. Aspartate 248 (proton acceptor) is an active-site residue. Lysine 270 serves as the catalytic Proton donor. Residues 301 to 303, isoleucine 306, 331 to 332, methionine 382, and glycine 411 contribute to the S-adenosyl-L-methionine site; these read GGD and TA.

This sequence in the N-terminal section; belongs to the precorrin-2 dehydrogenase / sirohydrochlorin ferrochelatase family. In the C-terminal section; belongs to the precorrin methyltransferase family.

The catalysed reaction is uroporphyrinogen III + 2 S-adenosyl-L-methionine = precorrin-2 + 2 S-adenosyl-L-homocysteine + H(+). It catalyses the reaction precorrin-2 + NAD(+) = sirohydrochlorin + NADH + 2 H(+). The enzyme catalyses siroheme + 2 H(+) = sirohydrochlorin + Fe(2+). It participates in cofactor biosynthesis; adenosylcobalamin biosynthesis; precorrin-2 from uroporphyrinogen III: step 1/1. The protein operates within cofactor biosynthesis; adenosylcobalamin biosynthesis; sirohydrochlorin from precorrin-2: step 1/1. It functions in the pathway porphyrin-containing compound metabolism; siroheme biosynthesis; precorrin-2 from uroporphyrinogen III: step 1/1. Its pathway is porphyrin-containing compound metabolism; siroheme biosynthesis; siroheme from sirohydrochlorin: step 1/1. It participates in porphyrin-containing compound metabolism; siroheme biosynthesis; sirohydrochlorin from precorrin-2: step 1/1. In terms of biological role, multifunctional enzyme that catalyzes the SAM-dependent methylations of uroporphyrinogen III at position C-2 and C-7 to form precorrin-2 via precorrin-1. Then it catalyzes the NAD-dependent ring dehydrogenation of precorrin-2 to yield sirohydrochlorin. Finally, it catalyzes the ferrochelation of sirohydrochlorin to yield siroheme. The chain is Siroheme synthase from Escherichia coli O6:K15:H31 (strain 536 / UPEC).